We begin with the raw amino-acid sequence, 513 residues long: Activin receptor type-2A (513 aa).

The signal sequence occupies residues 1 to 19 (MGAATKLAFAVFLISCSSG). Residues 20–139 (AILGRSETQE…VTPKPPLFNT (120 aa)) lie on the Extracellular side of the membrane. Cystine bridges form between Cys-30/Cys-60, Cys-50/Cys-78, Cys-85/Cys-104, Cys-91/Cys-103, and Cys-105/Cys-110. 2 N-linked (GlcNAc...) asparagine glycosylation sites follow: Asn-43 and Asn-66. The chain crosses the membrane as a helical span at residues 140 to 160 (LLYSLVPIMGIAVIVLFSFWM). The Cytoplasmic segment spans residues 161–513 (YRHHKLAYPP…VDFPPKESSL (353 aa)). Residues 192 to 485 (LQLLEIKARG…EERIIQMQKL (294 aa)) enclose the Protein kinase domain. ATP is bound by residues 198–206 (KARGRFGCV) and Lys-219. The active-site Proton acceptor is Asp-322.

The protein belongs to the protein kinase superfamily. TKL Ser/Thr protein kinase family. TGFB receptor subfamily. Requires Mg(2+) as cofactor. It depends on Mn(2+) as a cofactor. As to expression, expressed in hen anterior pituitary during the ovulatory cycle and in the ovarian follicle.

It is found in the cell membrane. It carries out the reaction L-threonyl-[receptor-protein] + ATP = O-phospho-L-threonyl-[receptor-protein] + ADP + H(+). The enzyme catalyses L-seryl-[receptor-protein] + ATP = O-phospho-L-seryl-[receptor-protein] + ADP + H(+). In terms of biological role, on ligand binding, forms a receptor complex consisting of two type II and two type I transmembrane serine/threonine kinases. Type II receptors phosphorylate and activate type I receptors which autophosphorylate, then bind and activate SMAD transcriptional regulators. Receptor for activin A, activin B and inhibin A. May modulate neuropeptide expression in dorsal root ganglia (DRG) neurons and ovarian follicle development. In Gallus gallus (Chicken), this protein is Activin receptor type-2A (ACVR2A).